We begin with the raw amino-acid sequence, 358 residues long: Ethanol acetyltransferase 1 (358 aa).

In terms of domain architecture, AB hydrolase-1 spans 59-166; sequence PIVFIHGLFG…NAPINQPHIS (108 aa). Active-site charge relay system residues include serine 132, aspartate 156, and histidine 305.

Belongs to the AB hydrolase superfamily.

It is found in the mitochondrion. The enzyme catalyses ethanol + acetyl-CoA = ethyl acetate + CoA. It catalyses the reaction acetyl-CoA + H2O = acetate + CoA + H(+). It carries out the reaction ethyl acetate + H2O = ethanol + acetate + H(+). Alcohol acetyltransferase that catalyzes the synthesis of ethyl acetate from ethanol and acetyl-CoA. Can also function as a thioesterase by hydrolyzing acetyl-CoA in the absence of ethanol, as well as esterase hydrolyzing ethyl acetate. The sequence is that of Ethanol acetyltransferase 1 (EAT1) from Eremothecium cymbalariae (strain CBS 270.75 / DBVPG 7215 / KCTC 17166 / NRRL Y-17582) (Yeast).